The following is a 140-amino-acid chain: Sperm protein associated with the nucleus on the X chromosome N3 (140 aa).

3 stretches are compositionally biased toward polar residues: residues 1–20 (MEQP…CKSN), 62–79 (INSN…SINP), and 131–140 (EGSSQDSGED). The segment at 1–140 (MEQPTSSTNG…EGSSQDSGED (140 aa)) is disordered.

Belongs to the SPAN-X family.

This Pan troglodytes (Chimpanzee) protein is Sperm protein associated with the nucleus on the X chromosome N3 (SPANXN3).